Here is a 491-residue protein sequence, read N- to C-terminus: Keratin, type II microfibrillar, component 7C (491 aa).

Blocked amino end (Cys) is present on cysteine 1. The interval 1-109 (CGFSTVGSGF…PNAQCVKQEE (109 aa)) is head. The IF rod domain maps to 109-420 (EKEQIKCLNN…RLLEGEEQRL (312 aa)). Residues 110 to 144 (KEQIKCLNNRFAAFIDKVRFLEQQNKLLETKLQFF) are coil 1A. The tract at residues 145–154 (QNRQCCESNL) is linker 1. The segment at 155-255 (EPLFEGYIET…YQEEIRVLQA (101 aa)) is coil 1B. The interval 256-272 (NISDTSVIVKMDNSRDL) is linker 12. The coil 2 stretch occupies residues 273 to 416 (NMDCIVAEIK…ATYRRLLEGE (144 aa)). The interval 417–491 (EQRLCEGVGA…GGGSCSLGRC (75 aa)) is tail.

It belongs to the intermediate filament family.

Wool microfibrillar keratin. This Ovis aries (Sheep) protein is Keratin, type II microfibrillar, component 7C.